Reading from the N-terminus, the 376-residue chain is tRNA-specific 2-thiouridylase MnmA (376 aa).

ATP is bound by residues 16-23 and Leu42; that span reads AMSGGVDS. The active-site Nucleophile is the Cys111. Cys111 and Cys210 are disulfide-bonded. Position 135 (Gly135) interacts with ATP. Residues 158–160 form an interaction with tRNA region; that stretch reads KDQ. The active-site Cysteine persulfide intermediate is the Cys210.

The protein belongs to the MnmA/TRMU family.

The protein localises to the cytoplasm. It carries out the reaction S-sulfanyl-L-cysteinyl-[protein] + uridine(34) in tRNA + AH2 + ATP = 2-thiouridine(34) in tRNA + L-cysteinyl-[protein] + A + AMP + diphosphate + H(+). Functionally, catalyzes the 2-thiolation of uridine at the wobble position (U34) of tRNA, leading to the formation of s(2)U34. The polypeptide is tRNA-specific 2-thiouridylase MnmA (Streptomyces coelicolor (strain ATCC BAA-471 / A3(2) / M145)).